We begin with the raw amino-acid sequence, 450 residues long: tRNA-2-methylthio-N(6)-dimethylallyladenosine synthase (450 aa).

The region spanning 8-128 (KRLYIKTYGC…LPELIARAHR (121 aa)) is the MTTase N-terminal domain. Cys-17, Cys-53, Cys-91, Cys-166, Cys-170, and Cys-173 together coordinate [4Fe-4S] cluster. Positions 152-382 (RPTGVTAFLT…QALLEQQQLA (231 aa)) constitute a Radical SAM core domain. The 63-residue stretch at 385–447 (AAQAGRVLPV…RNSLAGVLEL (63 aa)) folds into the TRAM domain.

This sequence belongs to the methylthiotransferase family. MiaB subfamily. As to quaternary structure, monomer. Requires [4Fe-4S] cluster as cofactor.

Its subcellular location is the cytoplasm. The catalysed reaction is N(6)-dimethylallyladenosine(37) in tRNA + (sulfur carrier)-SH + AH2 + 2 S-adenosyl-L-methionine = 2-methylsulfanyl-N(6)-dimethylallyladenosine(37) in tRNA + (sulfur carrier)-H + 5'-deoxyadenosine + L-methionine + A + S-adenosyl-L-homocysteine + 2 H(+). Functionally, catalyzes the methylthiolation of N6-(dimethylallyl)adenosine (i(6)A), leading to the formation of 2-methylthio-N6-(dimethylallyl)adenosine (ms(2)i(6)A) at position 37 in tRNAs that read codons beginning with uridine. The polypeptide is tRNA-2-methylthio-N(6)-dimethylallyladenosine synthase (Phenylobacterium zucineum (strain HLK1)).